The sequence spans 90 residues: Protein LURE 1.2 (90 aa).

Residues 1–19 form the signal peptide; sequence MKLPIIFLTLLIFVSSCTS. Asn23 carries an N-linked (GlcNAc...) asparagine glycan. 3 disulfide bridges follow: Cys58/Cys75, Cys61/Cys82, and Cys65/Cys84. The tract at residues 67 to 87 is PRK6 binding; the sequence is RRGKYIRTCSFERKLCRCSIS.

Belongs to the DEFL family. As to quaternary structure, interacts with MDIS1, MIK1, MIK2 and TDR/PXY, but not with MDIS2. Binds to PRK6 LRRs. As to expression, expressed in the pistil. Detected exclusively in the synergid cells.

It is found in the secreted. Pollen tube attractants guiding pollen tubes to the ovular micropyle. Attracts specifically pollen tubes from A.thaliana, but not those from A.lyrata. Triggers endocytosis of MDIS1 in the pollen tube tip. This is Protein LURE 1.2 from Arabidopsis thaliana (Mouse-ear cress).